A 1513-amino-acid polypeptide reads, in one-letter code: DNA-directed RNA polymerase subunit beta'' (1513 aa).

Residues cysteine 220, cysteine 296, cysteine 303, and cysteine 306 each coordinate Zn(2+). The interval 644–769 (RTREKDSENE…EYGNPEEDSV (126 aa)) is disordered. Residues 659-679 (NEYRTREEECKTLEDEYRTRE) show a composition bias toward basic and acidic residues. Over residues 680-707 (EEYETLEDEYGIPENEYETLEDEYGILE) the composition is skewed to acidic residues. Residues 726-737 (NKYRPREDKYGT) show a composition bias toward basic and acidic residues. The span at 738-767 (LEEDSEDEHGTLEEDSEEDSEDEYGNPEED) shows a compositional bias: acidic residues.

The protein belongs to the RNA polymerase beta' chain family. RpoC2 subfamily. In terms of assembly, in plastids the minimal PEP RNA polymerase catalytic core is composed of four subunits: alpha, beta, beta', and beta''. When a (nuclear-encoded) sigma factor is associated with the core the holoenzyme is formed, which can initiate transcription. Requires Zn(2+) as cofactor.

Its subcellular location is the plastid. The protein resides in the chloroplast. The enzyme catalyses RNA(n) + a ribonucleoside 5'-triphosphate = RNA(n+1) + diphosphate. Its function is as follows. DNA-dependent RNA polymerase catalyzes the transcription of DNA into RNA using the four ribonucleoside triphosphates as substrates. The protein is DNA-directed RNA polymerase subunit beta'' of Oryza nivara (Indian wild rice).